Consider the following 483-residue polypeptide: Spore germination protein B1 (483 aa).

5 helical membrane-spanning segments follow: residues 289-309 (ILIT…HTGL), 323-343 (LNVP…IELI), 353-373 (PIGQ…AVQA), 375-395 (IVSA…FTVP), and 410-430 (VMIS…LFVI).

This sequence belongs to the GerABKA family.

The protein resides in the cell membrane. Functionally, involved in the response to the germinative mixture of L-asparagine, glucose, fructose and potassium ions (AGFK). Cannot stimulate germination in the absence of gerD and gerK gene products (fructose and glucose receptors respectively). This Bacillus subtilis (strain 168) protein is Spore germination protein B1 (gerBA).